The sequence spans 156 residues: Ecotin (156 aa).

The signal sequence occupies residues 1 to 19; the sequence is MKALLIAAGVAALSSTAMA. A disulfide bond links cysteine 65 and cysteine 102.

It belongs to the protease inhibitor I11 (ecotin) family. Homodimer.

Its subcellular location is the periplasm. In terms of biological role, general inhibitor of family S1 serine proteases. This Pseudomonas aeruginosa (strain ATCC 15692 / DSM 22644 / CIP 104116 / JCM 14847 / LMG 12228 / 1C / PRS 101 / PAO1) protein is Ecotin.